The primary structure comprises 556 residues: Arginine--tRNA ligase 2 (556 aa).

The 'HIGH' region motif lies at 132–142 (ANPTGDLHLGH).

Belongs to the class-I aminoacyl-tRNA synthetase family. As to quaternary structure, monomer.

Its subcellular location is the cytoplasm. The enzyme catalyses tRNA(Arg) + L-arginine + ATP = L-arginyl-tRNA(Arg) + AMP + diphosphate. In Bacillus thuringiensis subsp. konkukian (strain 97-27), this protein is Arginine--tRNA ligase 2.